We begin with the raw amino-acid sequence, 75 residues long: Small ribosomal subunit protein bS18 (75 aa).

This sequence belongs to the bacterial ribosomal protein bS18 family. Part of the 30S ribosomal subunit. Forms a tight heterodimer with protein bS6.

Binds as a heterodimer with protein bS6 to the central domain of the 16S rRNA, where it helps stabilize the platform of the 30S subunit. In Paracoccus denitrificans (strain Pd 1222), this protein is Small ribosomal subunit protein bS18.